Consider the following 520-residue polypeptide: Non-specific phospholipase C6 (520 aa).

An N-terminal signal peptide occupies residues 1 to 31; the sequence is MKPSSASRFSLTFSHFLTLYCLLTQTHVAQG.

It belongs to the bacterial phospholipase C family. In terms of tissue distribution, expressed in roots, leaves, stems, flowers and siliques.

Its subcellular location is the secreted. This chain is Non-specific phospholipase C6 (NPC6), found in Arabidopsis thaliana (Mouse-ear cress).